A 317-amino-acid polypeptide reads, in one-letter code: Glycine--tRNA ligase alpha subunit (317 aa).

Belongs to the class-II aminoacyl-tRNA synthetase family. Tetramer of two alpha and two beta subunits.

It localises to the cytoplasm. The catalysed reaction is tRNA(Gly) + glycine + ATP = glycyl-tRNA(Gly) + AMP + diphosphate. The chain is Glycine--tRNA ligase alpha subunit from Pseudomonas fluorescens (strain SBW25).